The following is a 787-amino-acid chain: Zinc finger protein 227 (787 aa).

A KRAB domain is found at 23–94; the sequence is VTFKDVAVVF…ERETQRNGHS (72 aa). C2H2-type zinc fingers lie at residues 243 to 275, 312 to 334, 340 to 362, 368 to 390, 396 to 418, 424 to 446, 452 to 474, 480 to 502, 508 to 530, 536 to 558, 564 to 586, 592 to 614, 620 to 642, 648 to 670, 676 to 698, 704 to 726, 732 to 754, and 760 to 782; these read HPCR…LQTH, YRCD…YRTH, YRCE…QRVH, YKCE…QRVH, YKCD…RRVH, YRCE…FRVH, YTCK…QNVH, FKCE…QRVH, YRCD…QVIH, YTCE…QRVH, YKCG…QRVH, YKCD…QRGH, HKCE…LSVH, and YKCN…QKVH.

It belongs to the krueppel C2H2-type zinc-finger protein family.

It localises to the nucleus. Functionally, may be involved in transcriptional regulation. This is Zinc finger protein 227 (ZNF227) from Bos taurus (Bovine).